The primary structure comprises 66 residues: MRHLLVLLLICLSVIAMAQATFGGGLGGAVGGRRRRDIGGGLGGAVGGRRRRDIGGGLGGAVGGKS.

A signal peptide spans 1 to 20 (MRHLLVLLLICLSVIAMAQA). Residues 21–66 (TFGGGLGGAVGGRRRRDIGGGLGGAVGGRRRRDIGGGLGGAVGGKS) form a 3 X 16 AA tandem repeats of [FI]-G-G-G-L-G-G-A-V-G-G-R-R-R-R-D region. Repeat copies occupy residues 22–37 (FGGG…RRRD) and 38–53 (IGGG…RRRD). Glycine amide is present on Gly-31. A propeptide spanning residues 33 to 37 (RRRRD) is cleaved from the precursor. Gly-47 is subject to Glycine amide. A propeptide spanning residues 49 to 53 (RRRRD) is cleaved from the precursor. A 3; half-length repeat occupies 54-64 (IGGGLGGAVGG).

Belongs to the limacoditoxin-59 family. As to expression, expressed by the venom secretory cell of the spine. The spine is a cuticular structure containing a single large nucleated venom-secreting cell at its base. It is an independent unit capable of producing, storing and injecting venom. On the back of D.vulnerans caterpillars, spines are grouped together by 50 to 100 to form scoli, of which there are eight in D.vulnerans.

Its subcellular location is the secreted. Its function is as follows. Probable toxin. The sequence is that of U-limacoditoxin(59)-Dv128 from Doratifera vulnerans (Mottled cup moth).